The following is a 223-amino-acid chain: UPF0502 protein Sde_2426 (223 aa).

This sequence belongs to the UPF0502 family.

The protein is UPF0502 protein Sde_2426 of Saccharophagus degradans (strain 2-40 / ATCC 43961 / DSM 17024).